A 653-amino-acid polypeptide reads, in one-letter code: UvrABC system protein C (653 aa).

Residues 44-122 (NAPGVYRMVN…IKRLRPRFNV (79 aa)) form the GIY-YIG domain. One can recognise a UVR domain in the interval 232–267 (STVKAEIATAMQEASQALDFERAAIYRDRLAALSHV).

Belongs to the UvrC family. In terms of assembly, interacts with UvrB in an incision complex.

It localises to the cytoplasm. Functionally, the UvrABC repair system catalyzes the recognition and processing of DNA lesions. UvrC both incises the 5' and 3' sides of the lesion. The N-terminal half is responsible for the 3' incision and the C-terminal half is responsible for the 5' incision. The protein is UvrABC system protein C of Chelativorans sp. (strain BNC1).